The chain runs to 79 residues: Putative membrane protein insertion efficiency factor (79 aa).

The protein belongs to the UPF0161 family.

Its subcellular location is the cell inner membrane. In terms of biological role, could be involved in insertion of integral membrane proteins into the membrane. This is Putative membrane protein insertion efficiency factor from Cytophaga hutchinsonii (strain ATCC 33406 / DSM 1761 / CIP 103989 / NBRC 15051 / NCIMB 9469 / D465).